Consider the following 166-residue polypeptide: Ribosome maturation factor RimP (166 aa).

This sequence belongs to the RimP family.

Its subcellular location is the cytoplasm. Required for maturation of 30S ribosomal subunits. This chain is Ribosome maturation factor RimP, found in Paramagnetospirillum magneticum (strain ATCC 700264 / AMB-1) (Magnetospirillum magneticum).